A 1237-amino-acid polypeptide reads, in one-letter code: Anion exchange protein 2 (1237 aa).

Positions 1-237 (MSSAPRRPAS…SYNLQERRRI (237 aa)) are disordered. Over 1-704 (MSSAPRRPAS…DFRDALDPQC (704 aa)) the chain is Cytoplasmic. Basic and acidic residues-rich tracts occupy residues 37–49 (ELHR…RFEE) and 58–75 (GGEE…EYHR). Composition is skewed to basic residues over residues 76-85 (QSSHHIHHPL) and 94-110 (RRRK…RRRP). 5 positions are modified to phosphoserine: Ser-113, Ser-132, Ser-144, Ser-170, and Ser-172. The segment covering 120–133 (TIEEGEEDEDEASE) has biased composition (acidic residues). A compositionally biased stretch (low complexity) spans 137 to 151 (ARAPTQPSPASTPSS). The span at 205–215 (GTAGGDDGGAS) shows a compositional bias: gly residues. Ser-239 carries the phosphoserine modification. Thr-253 is subject to Phosphothreonine. Lys-270 is subject to N6-methyllysine. The disordered stretch occupies residues 286–316 (RKNAKGSVQSGREGREPGPTPRARPRAPHKP). Phosphoserine is present on Ser-439. Residues 445–466 (SLLGHHHGQGAESDPHVTEPLI) are disordered. The tract at residues 704 to 1237 (CLAAVIFIYF…DEYNEMPMPV (534 aa)) is membrane (anion exchange). A run of 4 helical transmembrane segments spans residues 705–725 (LAAV…FGGL), 750–770 (FCLL…LLVF), 792–812 (IGFW…SFLV), and 822–842 (IFAF…LVKI). Topologically, residues 843–893 (FQEHPLHGCSVSNSSEADSGDNATWAGTRVTLGLGNGSSAGPAGQGRPRGQ) are extracellular. 3 N-linked (GlcNAc...) asparagine glycosylation sites follow: Asn-855, Asn-864, and Asn-878. Residues 894–914 (PNTALLSLVLMAGTFFIAFFL) form a helical membrane-spanning segment. The Cytoplasmic segment spans residues 915–929 (RKFKNGRFFPGRVRR). 5 helical membrane-spanning segments follow: residues 930-950 (VIGD…DYSI), 985-1005 (FPVW…ILIF), 1032-1052 (LLLI…WLAA), 1086-1106 (RVTG…GDLL), and 1109-1129 (IPLA…LNGI). Cys-1169 carries S-palmitoyl cysteine lipidation. A helical membrane pass occupies residues 1170–1190 (LALLWAVMSTAASLAFPFILI).

This sequence belongs to the anion exchanger (TC 2.A.31) family.

It is found in the apical cell membrane. Its subcellular location is the basolateral cell membrane. The enzyme catalyses hydrogencarbonate(in) + chloride(out) = hydrogencarbonate(out) + chloride(in). Functionally, sodium-independent anion exchanger which mediates the electroneutral exchange of chloride for bicarbonate ions across the cell membrane. Plays an important role in osteoclast differentiation and function. Regulates bone resorption and calpain-dependent actin cytoskeleton organization in osteoclasts via anion exchange-dependent control of pH. Essential for intracellular pH regulation in CD8(+) T-cells upon CD3 stimulation, modulating CD8(+) T-cell response. This Equus caballus (Horse) protein is Anion exchange protein 2 (SLC4A2).